Consider the following 227-residue polypeptide: Phosphoribosylformylglycinamidine synthase subunit PurQ (227 aa).

A Glutamine amidotransferase type-1 domain is found at 3-225 (FAVIVFPGSN…LRNWRESHVV (223 aa)). Catalysis depends on C86, which acts as the Nucleophile. Active-site residues include H194 and E196.

Part of the FGAM synthase complex composed of 1 PurL, 1 PurQ and 2 PurS subunits.

The protein localises to the cytoplasm. It carries out the reaction N(2)-formyl-N(1)-(5-phospho-beta-D-ribosyl)glycinamide + L-glutamine + ATP + H2O = 2-formamido-N(1)-(5-O-phospho-beta-D-ribosyl)acetamidine + L-glutamate + ADP + phosphate + H(+). It catalyses the reaction L-glutamine + H2O = L-glutamate + NH4(+). The protein operates within purine metabolism; IMP biosynthesis via de novo pathway; 5-amino-1-(5-phospho-D-ribosyl)imidazole from N(2)-formyl-N(1)-(5-phospho-D-ribosyl)glycinamide: step 1/2. Its function is as follows. Part of the phosphoribosylformylglycinamidine synthase complex involved in the purines biosynthetic pathway. Catalyzes the ATP-dependent conversion of formylglycinamide ribonucleotide (FGAR) and glutamine to yield formylglycinamidine ribonucleotide (FGAM) and glutamate. The FGAM synthase complex is composed of three subunits. PurQ produces an ammonia molecule by converting glutamine to glutamate. PurL transfers the ammonia molecule to FGAR to form FGAM in an ATP-dependent manner. PurS interacts with PurQ and PurL and is thought to assist in the transfer of the ammonia molecule from PurQ to PurL. The sequence is that of Phosphoribosylformylglycinamidine synthase subunit PurQ from Halalkalibacterium halodurans (strain ATCC BAA-125 / DSM 18197 / FERM 7344 / JCM 9153 / C-125) (Bacillus halodurans).